We begin with the raw amino-acid sequence, 239 residues long: Derlin-2 (239 aa).

At 1 to 56 (MAYQSLRLEYLQIPPVSRAYTTACVLTTAAVQLELITPFQLYFNPELIFKHFQIWR) the chain is on the cytoplasmic side. Residues 57 to 77 (LITNFLFFGPVGFNFLFNMIF) form a helical membrane-spanning segment. Residues 78–98 (LYRYCRMLEEGSFRGRTADFV) lie on the Lumenal side of the membrane. The helical transmembrane segment at 99–119 (FMFLFGGFLMTLFGLFVSLVF) threads the bilayer. Residues 120–150 (LGQAFTIMLVYVWSRRNPYVRMNFFGLLNFQ) lie on the Cytoplasmic side of the membrane. A helical transmembrane segment spans residues 151–171 (APFLPWVLMGFSLLLGNSIIV). A topological domain (lumenal) is located at residue Asp172. The chain crosses the membrane as a helical span at residues 173–193 (LLGIAVGHIYFFLEDVFPNQP). At 194–239 (GGIRILKTPSILKAIFDTPDEDPNYNPLPEERPGGFAWGEGQRLGG) the chain is on the cytoplasmic side. The interval 215–239 (DPNYNPLPEERPGGFAWGEGQRLGG) is disordered. The segment covering 229 to 239 (FAWGEGQRLGG) has biased composition (gly residues).

The protein belongs to the derlin family. In terms of assembly, forms homo- and heterooligomers with DERL3 and, to a lesser extent, with DERL1. Interacts with the SEL1L/SYVN1 and VCP/SELENOS protein complexes. Mediates association between VCP and EDEM1, as well as that between VCP and the misfolded glycoproteins. Interacts with OS9. Interacts with SELENOK and SELENOS. Interacts with the signal recognition particle/SRP and the SRP receptor; in the process of endoplasmic reticulum stress-induced pre-emptive quality control. Interacts with CCDC47.

The protein localises to the endoplasmic reticulum membrane. In terms of biological role, functional component of endoplasmic reticulum-associated degradation (ERAD) for misfolded lumenal glycoproteins, but not that of misfolded nonglycoproteins. May act by forming a channel that allows the retrotranslocation of misfolded glycoproteins into the cytosol where they are ubiquitinated and degraded by the proteasome. May mediate the interaction between VCP and misfolded glycoproteins. May also be involved in endoplasmic reticulum stress-induced pre-emptive quality control, a mechanism that selectively attenuates the translocation of newly synthesized proteins into the endoplasmic reticulum and reroutes them to the cytosol for proteasomal degradation. The chain is Derlin-2 from Pongo abelii (Sumatran orangutan).